Here is a 340-residue protein sequence, read N- to C-terminus: Beta-D-galactofuranosidase xynD (340 aa).

The N-terminal stretch at 1 to 24 is a signal peptide; that stretch reads MKHHNYYPSTCLSILPFLLPLTMS. The active-site Proton acceptor is D51. N-linked (GlcNAc...) asparagine glycosylation is found at N96 and N165. The active-site Proton donor is the E222. N-linked (GlcNAc...) asparagine glycosylation is found at N302 and N328.

It belongs to the glycosyl hydrolase 43 family.

The protein resides in the secreted. It participates in glycan degradation. Glycoside hydrolase family 43 beta-D-galactofuranosidase involved in the degradation of beta-galactofuranoside (Galf)-containing glycans such as galactomannan or O-glycans. Is not active on beta-1,5- or beta-1,6-linked beta-D-galactofuranose (Galf) residues. The sequence is that of Beta-D-galactofuranosidase xynD from Aspergillus niger (strain ATCC MYA-4892 / CBS 513.88 / FGSC A1513).